The following is a 364-amino-acid chain: Metalloendoproteinase 1-MMP (364 aa).

Positions Met-1 to Ala-28 are cleaved as a signal peptide. The propeptide at Arg-29 to His-149 is activation peptide. An N-linked (GlcNAc...) asparagine glycan is attached at Asn-49. The Cysteine switch signature appears at Pro-128–Thr-135. Residue Cys-130 participates in Zn(2+) binding. Asp-211 is a Ca(2+) binding site. Residues His-221 and Asp-223 each coordinate Zn(2+). 2 residues coordinate Ca(2+): Asp-228 and Gly-229. Zn(2+) is bound at residue His-236. A Ca(2+)-binding site is contributed by Gly-243. His-246 is a Zn(2+) binding site. Residues Asp-248 and Glu-251 each contribute to the Ca(2+) site. His-275 serves as a coordination point for Zn(2+). Residue Glu-276 is part of the active site. The Zn(2+) site is built by His-279 and His-285. Residue Asn-338 is glycosylated (N-linked (GlcNAc...) asparagine). Gly-339 is lipidated: GPI-anchor amidated glycine. The propeptide at Thr-340 to Leu-364 is removed in mature form.

It belongs to the peptidase M10A family. Matrix metalloproteinases (MMPs) subfamily. The cofactor is Ca(2+). Requires Zn(2+) as cofactor. Mostly expressed in flowers, roots and stems, and, to a lower extent, in leaves.

The protein localises to the cell membrane. With respect to regulation, inhibited by human TIMP-1 and TIMP-2 and by the peptide hydroxamate inhibitor (BB-94). Repressed by acetohydroxamic acid (AHA). Its function is as follows. Matrix metalloproteinases (MMPs) or matrixins may play a role in the degradation and remodeling of the extracellular matrix (ECM) during development or in response to stresses. Can cleave myelin basic protein as well as fluorigenic peptide substrates, McaPLANvaDpaAR-NH(2) and McaPChaGNvaHADpa-NH(2) 4-fold more efficiently than McaPLGLDpaAR-NH(2) (QF24). Active on myelin basic protein (MBP) and, to some extent, on McaPLGLDpaAR-NH(2) (QF24) and beta-casein. This Arabidopsis thaliana (Mouse-ear cress) protein is Metalloendoproteinase 1-MMP.